Reading from the N-terminus, the 228-residue chain is Probable calcium-binding protein CML48 (228 aa).

EF-hand domains are found at residues E52 to D87 and N121 to V156. Ca(2+)-binding residues include D65, N67, S69, and E76.

In terms of biological role, potential calcium sensor. This chain is Probable calcium-binding protein CML48 (CML48), found in Arabidopsis thaliana (Mouse-ear cress).